The following is a 256-amino-acid chain: Isoprenyl transferase 1 (256 aa).

D34 is an active-site residue. D34 serves as a coordination point for Mg(2+). Residues 35-38 (GNRR), W39, H52, and 80-82 (STE) contribute to the substrate site. N83 serves as the catalytic Proton acceptor. Residues R86, R205, and 211 to 213 (RLS) each bind substrate. E224 contacts Mg(2+).

It belongs to the UPP synthase family. Homodimer. Mg(2+) serves as cofactor.

Its function is as follows. Catalyzes the condensation of isopentenyl diphosphate (IPP) with allylic pyrophosphates generating different type of terpenoids. The sequence is that of Isoprenyl transferase 1 from Corynebacterium efficiens (strain DSM 44549 / YS-314 / AJ 12310 / JCM 11189 / NBRC 100395).